A 244-amino-acid chain; its full sequence is 3-oxoacyl-[acyl-carrier-protein] reductase FabG (244 aa).

NADP(+) contacts are provided by residues Gly-9 to Arg-12, Asn-60 to Val-61, and Asn-87. A substrate-binding site is contributed by Ser-139. Tyr-152 serves as the catalytic Proton acceptor. Residues Tyr-152–Lys-156 and Ile-185 each bind NADP(+).

It belongs to the short-chain dehydrogenases/reductases (SDR) family. As to quaternary structure, homotetramer.

It carries out the reaction a (3R)-hydroxyacyl-[ACP] + NADP(+) = a 3-oxoacyl-[ACP] + NADPH + H(+). It functions in the pathway lipid metabolism; fatty acid biosynthesis. Functionally, catalyzes the NADPH-dependent reduction of beta-ketoacyl-ACP substrates to beta-hydroxyacyl-ACP products, the first reductive step in the elongation cycle of fatty acid biosynthesis. The sequence is that of 3-oxoacyl-[acyl-carrier-protein] reductase FabG (fabG) from Staphylococcus epidermidis (strain ATCC 35984 / DSM 28319 / BCRC 17069 / CCUG 31568 / BM 3577 / RP62A).